The primary structure comprises 309 residues: uncharacterized protein (309 aa).

This is an uncharacterized protein from Bacillus subtilis (strain 168).